The chain runs to 290 residues: 33 kDa chaperonin (290 aa).

2 disulfides stabilise this stretch: C235–C237 and C268–C271.

This sequence belongs to the HSP33 family. Under oxidizing conditions two disulfide bonds are formed involving the reactive cysteines. Under reducing conditions zinc is bound to the reactive cysteines and the protein is inactive.

The protein resides in the cytoplasm. In terms of biological role, redox regulated molecular chaperone. Protects both thermally unfolding and oxidatively damaged proteins from irreversible aggregation. Plays an important role in the bacterial defense system toward oxidative stress. This chain is 33 kDa chaperonin, found in Streptococcus pyogenes serotype M49 (strain NZ131).